We begin with the raw amino-acid sequence, 128 residues long: Transcription antitermination protein NusB (128 aa).

It belongs to the NusB family.

Its function is as follows. Involved in transcription antitermination. Required for transcription of ribosomal RNA (rRNA) genes. Binds specifically to the boxA antiterminator sequence of the ribosomal RNA (rrn) operons. This chain is Transcription antitermination protein NusB, found in Listeria innocua serovar 6a (strain ATCC BAA-680 / CLIP 11262).